Here is a 614-residue protein sequence, read N- to C-terminus: ATP-dependent rRNA helicase SPB4 (614 aa).

The Q motif signature appears at 10–38; sequence WSVLKCDLHPWIKEAIKSLGYPTMTPVQA. The Helicase ATP-binding domain occupies 41–233; the sequence is IPLFSGNKDV…RTGMANPVKI (193 aa). 54-61 contributes to the ATP binding site; the sequence is AVTGSGKT. The DEAD box signature appears at 181-184; that stretch reads DEAD. Residues 260–431 enclose the Helicase C-terminal domain; sequence KISALIALIK…KFQKKFRKYM (172 aa). The stretch at 510-581 forms a coiled coil; it reads EYADKQKEES…IEKQLMDDSS (72 aa). The segment covering 514 to 529 has biased composition (basic and acidic residues); it reads KQKEESRKKNLEEDKA. The interval 514-614 is disordered; it reads KQKEESRKKN…DSMQGSFDDL (101 aa). Residues 530–541 are compositionally biased toward basic residues; the sequence is RKVHDAKKRKEL. 2 stretches are compositionally biased toward basic and acidic residues: residues 551–563 and 584–595; these read KTDKIETKQERRE and EETKVDWKEMVK. Over residues 604 to 614 the composition is skewed to polar residues; sequence SDSMQGSFDDL.

It belongs to the DEAD box helicase family. DDX55/SPB4 subfamily. As to quaternary structure, component of pre-60S ribosomal complexes.

It localises to the nucleus. The protein localises to the nucleolus. It carries out the reaction ATP + H2O = ADP + phosphate + H(+). ATP-binding RNA helicase involved in the biogenesis of 60S ribosomal subunits. Binds 90S pre-ribosomal particles and dissociates from pre-60S ribosomal particles after processing of 27SB pre-rRNA. Required for the normal formation of 18S rRNA through the processing of pre-rRNAs at sites A0, A1 and A2, and the normal formation of 25S and 5.8S rRNAs through the processing of pre-rRNAs at sites C1 and C2. This chain is ATP-dependent rRNA helicase SPB4, found in Debaryomyces hansenii (strain ATCC 36239 / CBS 767 / BCRC 21394 / JCM 1990 / NBRC 0083 / IGC 2968) (Yeast).